The following is a 310-amino-acid chain: tRNA uridine(34) hydroxylase (310 aa).

Residues 127 to 225 form the Rhodanese domain; the sequence is KNQNTIVIDT…YLDDIPKEKN (99 aa). Residue C185 is the Cysteine persulfide intermediate of the active site.

The protein belongs to the TrhO family.

The catalysed reaction is uridine(34) in tRNA + AH2 + O2 = 5-hydroxyuridine(34) in tRNA + A + H2O. Functionally, catalyzes oxygen-dependent 5-hydroxyuridine (ho5U) modification at position 34 in tRNAs. In Prochlorococcus marinus (strain MIT 9312), this protein is tRNA uridine(34) hydroxylase.